The sequence spans 666 residues: Neurexin-2-beta (666 aa).

The span at 1 to 10 shows a compositional bias: gly residues; the sequence is MPPGGSGPGG. A disordered region spans residues 1–30; the sequence is MPPGGSGPGGCPRRPPALAGPLPPPPPPPP. Residues 1 to 50 form the signal peptide; that stretch reads MPPGGSGPGGCPRRPPALAGPLPPPPPPPPPPLLPLLPLLLLLLLGAAEG. Residues 21–30 show a composition bias toward pro residues; sequence PLPPPPPPPP. Topologically, residues 51–590 are extracellular; it reads ARVSSSLSTT…EVIRESSSTT (540 aa). The 209-residue stretch at 91 to 299 folds into the Laminin G-like domain; it reads TTYIFGKGGA…HLRLVGEGPS (209 aa). The Ca(2+) site is built by Asp-143 and Val-160. The N-linked (GlcNAc...) asparagine glycan is linked to Asn-190. Ile-242 and Asn-244 together coordinate Ca(2+). The tract at residues 327–346 is disordered; sequence ATTTTRRGRSPTLRDSTTQN. A glycan (O-linked (Xyl...) (heparan sulfate) serine) is linked at Ser-354. 2 disordered regions span residues 412–443 and 479–580; these read ATQDTLPPPAARRPPSGGPCQAERDDSDCEEP and TLLS…PGAV. The helical transmembrane segment at 591 to 611 threads the bilayer; that stretch reads GMVVGIVAAAALCILILLYAM. At 612–666 the chain is on the cytoplasmic side; that stretch reads YKYRNRDEGSYQVDQSRNYISNSAQSNGAVVKEKAPAAPKTPSKAKKNKDKEYYV. The disordered stretch occupies residues 633 to 666; it reads NSAQSNGAVVKEKAPAAPKTPSKAKKNKDKEYYV.

It belongs to the neurexin family. As to quaternary structure, interacts (via cytoplasmic C-terminal region) with CASK. Specific isoforms bind alpha-dystroglycan and neuroligins NLGN1, NLGN2 and NLGN3. Interacts with CBLN1, CBLN2 and, less avidly, with CBLN4. Interacts with CLSTN3. Post-translationally, O-glycosylated; contains heparan sulfate. Heparan sulfate attachment is required for synapse development by mediating interactions with neuroligins.

Its subcellular location is the presynaptic cell membrane. Functionally, neuronal cell surface protein that may be involved in cell recognition and cell adhesion. The sequence is that of Neurexin-2-beta (NRXN2) from Homo sapiens (Human).